Reading from the N-terminus, the 507-residue chain is Archaeal-type glutamate synthase [NADPH] (507 aa).

4Fe-4S ferredoxin-type domains follow at residues 10 to 39 (FVVERDDYKCIRCLACVRVCSYGANYYDEN) and 41 to 70 (NRVYTENYKCVGCHFCEAICPTEAITVRRN). [4Fe-4S] cluster is bound by residues Cys-19, Cys-22, Cys-25, Cys-29, Cys-50, Cys-53, Cys-56, and Cys-60.

It belongs to the glutamate synthase family. FMN serves as cofactor.

The enzyme catalyses 2 L-glutamate + NADP(+) = L-glutamine + 2-oxoglutarate + NADPH + H(+). This chain is Archaeal-type glutamate synthase [NADPH], found in Thermotoga neapolitana (strain ATCC 49049 / DSM 4359 / NBRC 107923 / NS-E).